A 429-amino-acid polypeptide reads, in one-letter code: Adenylosuccinate synthetase (429 aa).

Residues 12-18 (GDEGKGK) and 40-42 (GHT) each bind GTP. The active-site Proton acceptor is Asp13. Residues Asp13 and Gly40 each contribute to the Mg(2+) site. Residues 13–16 (DEGK), 38–41 (NAGH), Thr128, Arg142, Gln223, Thr238, and Arg302 each bind IMP. Catalysis depends on His41, which acts as the Proton donor. 298 to 304 (TVTGRPR) contacts substrate. Residues Arg304, 330–332 (LLD), and 412–414 (SVG) contribute to the GTP site.

The protein belongs to the adenylosuccinate synthetase family. Homodimer. The cofactor is Mg(2+).

The protein resides in the cytoplasm. The enzyme catalyses IMP + L-aspartate + GTP = N(6)-(1,2-dicarboxyethyl)-AMP + GDP + phosphate + 2 H(+). It participates in purine metabolism; AMP biosynthesis via de novo pathway; AMP from IMP: step 1/2. Plays an important role in the de novo pathway of purine nucleotide biosynthesis. Catalyzes the first committed step in the biosynthesis of AMP from IMP. The chain is Adenylosuccinate synthetase from Lactobacillus acidophilus (strain ATCC 700396 / NCK56 / N2 / NCFM).